Consider the following 119-residue polypeptide: MRSIENDRSNYQLTQKNKSADGLVFNVVTQDMINKSTKPYRGHRFTKENVRILESWFAKNIENPYLDTKGLENLMKNTSLSRIQIKNWVSNRRRKEKTITIAPELADLLSGEPLAKKKE.

A DNA-binding region (homeobox; TALE-type) is located at residues 38 to 100 (KPYRGHRFTK…NRRRKEKTIT (63 aa)).

The protein belongs to the TALE/M-ATYP homeobox family.

The protein resides in the nucleus. In terms of biological role, probably not a functional protein. Cells lacking A2 show no obvious alterations in mating, sporulation and cell growth. The chain is Putative mating-type protein A2 (MATA2) from Saccharomyces cerevisiae (Baker's yeast).